We begin with the raw amino-acid sequence, 93 residues long: Cobalt transport protein CbiN (93 aa).

Transmembrane regions (helical) follow at residues 5–25 (LMLL…NHGG) and 63–83 (LLFT…LGYC).

The protein belongs to the CbiN family. As to quaternary structure, forms an energy-coupling factor (ECF) transporter complex composed of an ATP-binding protein (A component, CbiO), a transmembrane protein (T component, CbiQ) and 2 possible substrate-capture proteins (S components, CbiM and CbiN) of unknown stoichimetry.

It is found in the cell inner membrane. Its pathway is cofactor biosynthesis; adenosylcobalamin biosynthesis. Its function is as follows. Part of the energy-coupling factor (ECF) transporter complex CbiMNOQ involved in cobalt import. This is Cobalt transport protein CbiN from Salmonella choleraesuis (strain SC-B67).